The sequence spans 508 residues: Photosystem II CP47 reaction center protein (508 aa).

The next 6 helical transmembrane spans lie at 21–36 (SVHIMHTALVAGWAGS), 101–115 (IVFSGLCFLAAIWHW), 140–156 (GIHLFLSGVACFGFGAF), 203–218 (IAAGILGILAGLFHLS), 237–252 (VLSSSIAAVFFAAFIV), and 457–472 (TFALLFFSGHIWHGAR).

Belongs to the PsbB/PsbC family. PsbB subfamily. PSII is composed of 1 copy each of membrane proteins PsbA, PsbB, PsbC, PsbD, PsbE, PsbF, PsbH, PsbI, PsbJ, PsbK, PsbL, PsbM, PsbT, PsbX, PsbY, PsbZ, Psb30/Ycf12, at least 3 peripheral proteins of the oxygen-evolving complex and a large number of cofactors. It forms dimeric complexes. Binds multiple chlorophylls. PSII binds additional chlorophylls, carotenoids and specific lipids. serves as cofactor.

Its subcellular location is the plastid. The protein localises to the chloroplast thylakoid membrane. In terms of biological role, one of the components of the core complex of photosystem II (PSII). It binds chlorophyll and helps catalyze the primary light-induced photochemical processes of PSII. PSII is a light-driven water:plastoquinone oxidoreductase, using light energy to abstract electrons from H(2)O, generating O(2) and a proton gradient subsequently used for ATP formation. In Pinus thunbergii (Japanese black pine), this protein is Photosystem II CP47 reaction center protein.